The primary structure comprises 101 residues: Vacuolar ATPase assembly integral membrane protein VMA21 (101 aa).

The Cytoplasmic segment spans residues 1-25 (MERLDKAALNALQPSDFRNESSLAS). The helical transmembrane segment at 26 to 46 (TLKTLLFFTALMITVPIGLYF) threads the bilayer. The Lumenal portion of the chain corresponds to 47–65 (TTKSYVFEGAFGMSNRDSY). A helical transmembrane segment spans residues 66–86 (FYAAIVAVVAVHVVLALFVYV). Residues 87–101 (AWNEGSRQWREGKQD) are Cytoplasmic-facing.

This sequence belongs to the VMA21 family. In terms of assembly, associates with the V0 complex of the vacuolar ATPase (V-ATPase). Interacts with ATP6AP2.

It is found in the endoplasmic reticulum membrane. The protein localises to the endoplasmic reticulum-Golgi intermediate compartment membrane. The protein resides in the cytoplasmic vesicle. It localises to the COPII-coated vesicle membrane. Functionally, required for the assembly of the V0 complex of the vacuolar ATPase (V-ATPase) in the endoplasmic reticulum. The sequence is that of Vacuolar ATPase assembly integral membrane protein VMA21 from Bos taurus (Bovine).